A 187-amino-acid chain; its full sequence is Elongation factor P (187 aa).

Belongs to the elongation factor P family.

Its subcellular location is the cytoplasm. It participates in protein biosynthesis; polypeptide chain elongation. Its function is as follows. Involved in peptide bond synthesis. Stimulates efficient translation and peptide-bond synthesis on native or reconstituted 70S ribosomes in vitro. Probably functions indirectly by altering the affinity of the ribosome for aminoacyl-tRNA, thus increasing their reactivity as acceptors for peptidyl transferase. This is Elongation factor P from Kocuria rhizophila (strain ATCC 9341 / DSM 348 / NBRC 103217 / DC2201).